The following is a 142-amino-acid chain: Large ribosomal subunit protein uL13 (142 aa).

This sequence belongs to the universal ribosomal protein uL13 family. In terms of assembly, part of the 50S ribosomal subunit.

In terms of biological role, this protein is one of the early assembly proteins of the 50S ribosomal subunit, although it is not seen to bind rRNA by itself. It is important during the early stages of 50S assembly. The protein is Large ribosomal subunit protein uL13 of Syntrophobacter fumaroxidans (strain DSM 10017 / MPOB).